We begin with the raw amino-acid sequence, 552 residues long: Putative transport protein YPTS_4123 (552 aa).

6 helical membrane passes run 1-21, 26-46, 65-85, 96-116, 119-139, and 158-178; these read MSAI…GLWI, IYGV…VGHF, FGLI…FFSS, FAIL…KLFA, LPII…LGAA, and MGYA…MWLI. RCK C-terminal domains follow at residues 192–276 and 279–361; these read AFDS…VVGE and DVTL…IVGN. Helical transmembrane passes span 371 to 391, 393 to 413, 439 to 459, 464 to 484, 493 to 513, and 530 to 550; these read MLPV…PLFV, GFPA…ALIL, IVLF…NTLV, LAWI…VGIL, YLTL…LAFA, and VYPL…VLFW.

The protein belongs to the AAE transporter (TC 2.A.81) family. YidE subfamily.

It localises to the cell membrane. This Yersinia pseudotuberculosis serotype IB (strain PB1/+) protein is Putative transport protein YPTS_4123.